The chain runs to 402 residues: Triose phosphate/phosphate translocator, chloroplastic (402 aa).

A chloroplast-targeting transit peptide spans 1 to 72 (MESRVLSRAT…KGASLLRPCP (72 aa)). The Chloroplast intermembrane portion of the chain corresponds to 73-96 (ATAGGNDSAGEEKVAPVGFFSRYP). The helical transmembrane segment at 97–117 (ALTTGFFFFTWYFLNVIFNIL) threads the bilayer. Topologically, residues 118–129 (NKKIYNYFPYPY) are lumenal. Residues 130–150 (FVSVIHLAVGVVYCLVSWTVG) traverse the membrane as a helical segment. Topologically, residues 151 to 207 (LPKRAPIDGNLLKLLIPVAVCHALGHVTSNVSFAAVAVSFTHTVKALEPFFNAAASQ) are chloroplast intermembrane. The helical transmembrane segment at 208 to 228 (FILGQSIPITLWLSLAPVVIG) threads the bilayer. The Lumenal segment spans residues 229 to 272 (VSMASLTELSFNWLGFISAMISNISFTYRSIYSKKAMTDMDSTN). A helical transmembrane segment spans residues 273-292 (IYAYISIIALIVCIPPALII). At 293 to 370 (EGPTLLKTGF…IIFGNKISTQ (78 aa)) the chain is on the chloroplast intermembrane side. Residues 371-391 (TGIGTGIAIAGVALYSFIKAQ) form a helical membrane-spanning segment. Residues 392 to 402 (IEEEKRQAKAA) lie on the Lumenal side of the membrane.

It belongs to the TPT transporter family. TPT (TC 2.A.7.9) subfamily. As to quaternary structure, homodimer.

It localises to the plastid. The protein localises to the chloroplast membrane. In terms of biological role, mediates the export of fixed carbons from the chloroplasts into the cytosol in the form of triose phosphates. The polypeptide is Triose phosphate/phosphate translocator, chloroplastic (Pisum sativum (Garden pea)).